A 353-amino-acid chain; its full sequence is Photosystem II D2 protein (353 aa).

Position 2 is an N-acetylthreonine (T2). T2 is subject to Phosphothreonine. Residues 41–61 form a helical membrane-spanning segment; it reads CAYFALGGWFTGTTFVTSWYT. Residue H118 coordinates chlorophyll a. The helical transmembrane segment at 125–141 threads the bilayer; sequence GFMLRQFELARSVQLRP. Residues Q130 and N143 each contribute to the pheophytin a site. Residues 153-166 traverse the membrane as a helical segment; the sequence is VFVSVFLIYPLGQS. A chlorophyll a-binding site is contributed by H198. The chain crosses the membrane as a helical span at residues 208–228; that stretch reads AALLCAIHGATVENTLFEDGD. H215 and F262 together coordinate a plastoquinone. H215 contributes to the Fe cation binding site. Position 269 (H269) interacts with Fe cation. Residues 279 to 295 form a helical membrane-spanning segment; sequence GLWMSAIGVVGLALNLR.

Belongs to the reaction center PufL/M/PsbA/D family. As to quaternary structure, PSII is composed of 1 copy each of membrane proteins PsbA, PsbB, PsbC, PsbD, PsbE, PsbF, PsbH, PsbI, PsbJ, PsbK, PsbL, PsbM, PsbT, PsbX, PsbY, PsbZ, Psb30/Ycf12, at least 3 peripheral proteins of the oxygen-evolving complex and a large number of cofactors. It forms dimeric complexes. The D1/D2 heterodimer binds P680, chlorophylls that are the primary electron donor of PSII, and subsequent electron acceptors. It shares a non-heme iron and each subunit binds pheophytin, quinone, additional chlorophylls, carotenoids and lipids. There is also a Cl(-1) ion associated with D1 and D2, which is required for oxygen evolution. The PSII complex binds additional chlorophylls, carotenoids and specific lipids. is required as a cofactor.

The protein localises to the plastid. The protein resides in the chloroplast thylakoid membrane. It carries out the reaction 2 a plastoquinone + 4 hnu + 2 H2O = 2 a plastoquinol + O2. Photosystem II (PSII) is a light-driven water:plastoquinone oxidoreductase that uses light energy to abstract electrons from H(2)O, generating O(2) and a proton gradient subsequently used for ATP formation. It consists of a core antenna complex that captures photons, and an electron transfer chain that converts photonic excitation into a charge separation. The D1/D2 (PsbA/PsbD) reaction center heterodimer binds P680, the primary electron donor of PSII as well as several subsequent electron acceptors. D2 is needed for assembly of a stable PSII complex. This chain is Photosystem II D2 protein, found in Pinus thunbergii (Japanese black pine).